The primary structure comprises 311 residues: MKVAVLGAAGGIGQALSLLLKTQLPAGSELSLYDVAPVVPGVAVDLSHIPTDVKVAGFGRDDLNGALTGADIVLIPAGMPRKPGMDRADLFNVNAGIIKVLAEGIVASCPKALVGVITNPVNGTVPIVAEVFKKAGTYDAARLFGVTTLDVIRSEAFVAELKGLDVATVKVPVIGGHSGTTILPLLSQVEGATFSDEEVAALTPRIQNAGTEVVEAKAGGGSATLSMGAAAARFCMSLVKGLQGEDVVDYAYVEGNGADAQFFAQPVRLGVNGVSEILPYGELSAFEQKAKEDMLATLKKDIQEGVDFMAS.

NAD(+) is bound by residues 7–13 and D34; that span reads GAAGGIG. Substrate-binding residues include R81 and R87. NAD(+) is bound by residues N94 and 117–119; that span reads ITN. Residues N119 and R153 each coordinate substrate. The active-site Proton acceptor is H177. Residue M227 coordinates NAD(+).

This sequence belongs to the LDH/MDH superfamily. MDH type 1 family. Homodimer.

It catalyses the reaction (S)-malate + NAD(+) = oxaloacetate + NADH + H(+). Functionally, catalyzes the reversible oxidation of malate to oxaloacetate. The chain is Malate dehydrogenase from Colwellia psychrerythraea (strain 34H / ATCC BAA-681) (Vibrio psychroerythus).